The chain runs to 226 residues: MALSDADVQKQIKHMMAFIEQEANEKAEEIDAKAEEEFNIEKGRLVQTQRLKIMEYYEKKEKQIEQQKKIQMSNLMNQARLKVLRARDDLITDLLNEAKQRLSKVVKDTTRYQVLLDGLVLQGLYQLLEPRMIVRCRKQDFPLVKAAVQKAIPMYKIATKNDVDVQIDQESYLPEDIAGGVEIYNGDRKIKVSNTLESRLDLIAQQMMPEVRGALFGANANRKFLD.

N-acetylalanine is present on A2. Y56 is modified (phosphotyrosine).

The protein belongs to the V-ATPase E subunit family. V-ATPase is a heteromultimeric enzyme made up of two complexes: the ATP-hydrolytic V1 complex and the proton translocation V0 complex. The V1 complex consists of three catalytic AB heterodimers that form a heterohexamer, three peripheral stalks each consisting of EG heterodimers, one central rotor including subunits D and F, and the regulatory subunits C and H. The proton translocation complex V0 consists of the proton transport subunit a, a ring of proteolipid subunits c9c'', rotary subunit d, subunits e and f, and the accessory subunits ATP6AP1/Ac45 and ATP6AP2/PRR. Interacts with RABL2/RABL2A; binds preferentially to GTP-bound RABL2. Interacts with ALDOC. Interacts with RAB11B. As to expression, kidney; localizes to early distal nephron, encompassing thick ascending limbs and distal convoluted tubules (at protein level). Ubiquitous. High expression in the skin.

It is found in the apical cell membrane. Its subcellular location is the cytoplasmic vesicle. The protein localises to the secretory vesicle. The protein resides in the synaptic vesicle membrane. It localises to the clathrin-coated vesicle membrane. Functionally, subunit of the V1 complex of vacuolar(H+)-ATPase (V-ATPase), a multisubunit enzyme composed of a peripheral complex (V1) that hydrolyzes ATP and a membrane integral complex (V0) that translocates protons. V-ATPase is responsible for acidifying and maintaining the pH of intracellular compartments and in some cell types, is targeted to the plasma membrane, where it is responsible for acidifying the extracellular environment. This Homo sapiens (Human) protein is V-type proton ATPase subunit E 1 (ATP6V1E1).